Here is a 467-residue protein sequence, read N- to C-terminus: MTHYDVVVLGAGPGGYVAAIRAAQLGLSTAVVEPKYWGGICLNVGCIPSKVLLHNAELAHIFTKEAKTFGISGDASFDYGIAYDRSRKVSEGRVAGVHFLMKKNKITEIHGYGRFTDANTLSVELSEGVPETPLKVTFNNVIIATGSKTRLVPGTLLSTNVITYEEQILTRELPDSIVIVGAGAIGIEFGYVLKNYGVDVTIVEFLPRAMPNEDAEVSKEIEKQFKKMGIKILTGTKVESISDNGSHVLVAVSKDGQFQELKADKVLQAIGFAPNVDGYGLDKVGVALTADKAVDIDDYMQTNVSHIYAIGDVTGKLQLAHVAEAQGVVAAEAIAGAETLALSDYRMMPRATFCQPNVASFGLTEQQARDGGYDVVVAKFPFTANAKAHGMGDPSGFVKLVADAKYGELLGGHMIGHNVSELLPELTLAQKWDLTATELVRNVHTHPTLSEALQECFHGLIGHMINF.

FAD contacts are provided by residues 33–41 (EPKYWGGIC), Lys-50, and Gly-113. Cys-41 and Cys-46 are joined by a disulfide. Residues 181 to 185 (GAGAI), Glu-204, and 269 to 272 (AIGF) each bind NAD(+). Residues Asp-312 and Ala-320 each coordinate FAD. His-446 acts as the Proton acceptor in catalysis.

It belongs to the class-I pyridine nucleotide-disulfide oxidoreductase family. Homodimer. Part of the PDH complex, consisting of multiple copies of AceE (E1), DlaT (E2) and Lpd (E3), and of the BCKADH complex, consisting of multiple copies of BkdA/BkdB (E1), BkdC (E2) and Lpd (E3). The cofactor is FAD.

The protein resides in the cytoplasm. The enzyme catalyses N(6)-[(R)-dihydrolipoyl]-L-lysyl-[protein] + NAD(+) = N(6)-[(R)-lipoyl]-L-lysyl-[protein] + NADH + H(+). Lipoamide dehydrogenase is a component of the alpha-ketoacid dehydrogenase complexes. Catalyzes the reoxidation of dihydrolipoyl groups which are covalently attached to the lipoate acyltransferase components (E2) of the complexes. The sequence is that of Dihydrolipoyl dehydrogenase (lpd) from Mycobacterium leprae (strain TN).